We begin with the raw amino-acid sequence, 508 residues long: GMP synthase [glutamine-hydrolyzing] (508 aa).

A Glutamine amidotransferase type-1 domain is found at 1–189; it reads MIVVLDFGSQ…ALLVCGCEKT (189 aa). Cys78 acts as the Nucleophile in catalysis. Residues His163 and Glu165 contribute to the active site. Residues 190-383 form the GMPS ATP-PPase domain; it reads WGMQNFAQKE…LGVSQDFLMR (194 aa). ATP is bound at residue 217-223; sequence SGGVDST.

In terms of assembly, homodimer.

The enzyme catalyses XMP + L-glutamine + ATP + H2O = GMP + L-glutamate + AMP + diphosphate + 2 H(+). Its pathway is purine metabolism; GMP biosynthesis; GMP from XMP (L-Gln route): step 1/1. In terms of biological role, catalyzes the synthesis of GMP from XMP. The sequence is that of GMP synthase [glutamine-hydrolyzing] from Helicobacter acinonychis (strain Sheeba).